The following is a 99-amino-acid chain: MTLKKYKGKYVILWPQYFDSSLSRKEGRRVPRELAVARPSQKELLEVAAALGLEAKPLEGKYPREWWNKEGPVLVEKRGSKREVITLLAKELRRRRYGK.

It belongs to the SRP19 family. As to quaternary structure, part of the signal recognition particle protein translocation system, which is composed of SRP and FtsY. Archaeal SRP consists of a 7S RNA molecule of 300 nucleotides and two protein subunits: SRP54 and SRP19.

The protein localises to the cytoplasm. Involved in targeting and insertion of nascent membrane proteins into the cytoplasmic membrane. Binds directly to 7S RNA and mediates binding of the 54 kDa subunit of the SRP. This is Signal recognition particle 19 kDa protein from Ignicoccus hospitalis (strain KIN4/I / DSM 18386 / JCM 14125).